Here is a 205-residue protein sequence, read N- to C-terminus: Variable small protein 11 (205 aa).

Positions 1–18 (MRKRISAIIMTLFMVFMS) are cleaved as a signal peptide. Cysteine 19 carries the N-palmitoyl cysteine lipid modification. The S-diacylglycerol cysteine moiety is linked to residue cysteine 19.

It belongs to the variable small protein (Vsp) family.

The protein resides in the cell outer membrane. The Vlp and Vsp proteins are antigenically distinct proteins, only one vlp or vsp gene is transcriptionally active at any one time. Switching between these genes is a mechanism of host immune response evasion. The chain is Variable small protein 11 from Borrelia hermsii.